Here is a 436-residue protein sequence, read N- to C-terminus: GTPase Der (436 aa).

2 consecutive EngA-type G domains span residues 4–167 (PVIA…PKIE) and 176–351 (IRFS…ESHS). GTP contacts are provided by residues 10-17 (GRPNVGKS), 57-61 (DTGGI), 119-122 (NKVD), 182-189 (GRPNVGKS), 229-233 (DTAGM), and 294-297 (NKWD). The region spanning 352-436 (IRIQTNVLND…PIHIIARARD (85 aa)) is the KH-like domain.

Belongs to the TRAFAC class TrmE-Era-EngA-EngB-Septin-like GTPase superfamily. EngA (Der) GTPase family. In terms of assembly, associates with the 50S ribosomal subunit.

GTPase that plays an essential role in the late steps of ribosome biogenesis. The chain is GTPase Der from Bacillus cereus (strain ATCC 10987 / NRS 248).